The following is a 247-amino-acid chain: MTRKFFVGGNWKMNGDYASVDGIVTFLNASADNSSVDVVVAPPAPYLAYAKSKLKAGVLVAAQNCYKVPKGAFTGEISPAMIKDLGLEWVILGHSERRHVFGESDALIAEKTVHALEAGIKVVFCIGEKLEEREAGHTKDVNFRQLQAIVDKGVSWENIVIAYEPVWAIGTGKTASGEQAQEVHEWIRAFLKEKVSPAVADATRIIYGGSVTADNAAELGKKPDIDGFLVGGASLKPDFVKIINARS.

Residues Asn10 and Lys12 each contribute to the substrate site. His94 (electrophile) is an active-site residue. Glu164 functions as the Proton acceptor in the catalytic mechanism.

The protein belongs to the triosephosphate isomerase family. As to quaternary structure, homodimer.

The protein localises to the cytoplasm. The catalysed reaction is D-glyceraldehyde 3-phosphate = dihydroxyacetone phosphate. It catalyses the reaction dihydroxyacetone phosphate = methylglyoxal + phosphate. It participates in carbohydrate biosynthesis; gluconeogenesis. It functions in the pathway carbohydrate degradation; glycolysis; D-glyceraldehyde 3-phosphate from glycerone phosphate: step 1/1. Its function is as follows. Triosephosphate isomerase is an extremely efficient metabolic enzyme that catalyzes the interconversion between dihydroxyacetone phosphate (DHAP) and D-glyceraldehyde-3-phosphate (G3P) in glycolysis and gluconeogenesis. In terms of biological role, it is also responsible for the non-negligible production of methylglyoxal a reactive cytotoxic side-product that modifies and can alter proteins, DNA and lipids. This is Triosephosphate isomerase (tpi-1) from Caenorhabditis elegans.